A 182-amino-acid chain; its full sequence is Flavodoxin (182 aa).

One can recognise a Flavodoxin-like domain in the interval Ile4–Ala173.

It belongs to the flavodoxin family. Requires FMN as cofactor.

Its function is as follows. Low-potential electron donor to a number of redox enzymes. NifF is the electron donor to nitrogenase. This Rhodobacter capsulatus (strain ATCC BAA-309 / NBRC 16581 / SB1003) protein is Flavodoxin (nifF).